The sequence spans 1309 residues: Mediator of RNA polymerase II transcription subunit 33A (1309 aa).

The disordered stretch occupies residues 809 to 829 (QTLNPVNSGTSSSSGAASEDS). A compositionally biased stretch (low complexity) spans 816–826 (SGTSSSSGAAS).

Belongs to the Mediator complex subunit 33 family. Component of the Mediator complex.

It is found in the nucleus. Its function is as follows. Component of the Mediator complex, a coactivator involved in the regulated transcription of nearly all RNA polymerase II-dependent genes. Mediator functions as a bridge to convey information from gene-specific regulatory proteins to the basal RNA polymerase II transcription machinery. The Mediator complex, having a compact conformation in its free form, is recruited to promoters by direct interactions with regulatory proteins and serves for the assembly of a functional preinitiation complex with RNA polymerase II and the general transcription factors. Involved in the repression of phenylpropanoid biosynthesis. May compete with MED33B for common binding partners or for occupancy in Mediator. This chain is Mediator of RNA polymerase II transcription subunit 33A (MED33A), found in Arabidopsis thaliana (Mouse-ear cress).